Here is a 95-residue protein sequence, read N- to C-terminus: CRISPR-associated endoribonuclease Cas2 (95 aa).

Asp10 contributes to the Mg(2+) binding site.

Belongs to the CRISPR-associated endoribonuclease Cas2 protein family. In terms of assembly, homodimer, forms a heterotetramer with a Cas1 homodimer. The cofactor is Mg(2+).

In terms of biological role, CRISPR (clustered regularly interspaced short palindromic repeat), is an adaptive immune system that provides protection against mobile genetic elements (viruses, transposable elements and conjugative plasmids). CRISPR clusters contain sequences complementary to antecedent mobile elements and target invading nucleic acids. CRISPR clusters are transcribed and processed into CRISPR RNA (crRNA). Functions as a ssRNA-specific endoribonuclease. Involved in the integration of spacer DNA into the CRISPR cassette. This chain is CRISPR-associated endoribonuclease Cas2, found in Geobacter sulfurreducens (strain ATCC 51573 / DSM 12127 / PCA).